We begin with the raw amino-acid sequence, 507 residues long: Arylsulfatase A (507 aa).

The first 18 residues, 1 to 18 (MGAPRSLLLALAAGLAVA), serve as a signal peptide directing secretion. Ca(2+) is bound by residues Asp29, Asp30, and Cys69. The Nucleophile role is filled by Cys69. 3-oxoalanine (Cys) is present on Cys69. Residue Lys123 coordinates substrate. The active site involves His125. Substrate is bound at residue Ser150. Cystine bridges form between Cys156–Cys172 and Cys161–Cys168. An N-linked (GlcNAc...) asparagine glycan is attached at Asn158. N-linked (GlcNAc...) asparagine glycosylation is present at Asn184. His229 contributes to the substrate binding site. Ca(2+) is bound by residues Asp281 and Asn282. 4 disulfide bridges follow: Cys300-Cys414, Cys488-Cys500, Cys489-Cys502, and Cys493-Cys499. Lys302 provides a ligand contact to substrate. An N-linked (GlcNAc...) asparagine glycan is attached at Asn350.

Belongs to the sulfatase family. In terms of assembly, homodimer at neutral pH and homooctamer at acidic pH. Exists both as a single chain of 58 kDa (component A) or as a chain of 50 kDa (component B) linked by disulfide bond(s) to a 7 kDa chain (component C). Interacts with SUMF1. Requires Ca(2+) as cofactor. Post-translationally, the conversion to 3-oxoalanine (also known as C-formylglycine, FGly), of a serine or cysteine residue in prokaryotes and of a cysteine residue in eukaryotes, is critical for catalytic activity. This post-translational modification is severely defective in multiple sulfatase deficiency (MSD).

It is found in the endoplasmic reticulum. The protein resides in the lysosome. It catalyses the reaction an N-acyl-1-beta-D-(3-O-sulfo)-galactosyl-sphing-4-enine + H2O = a beta-D-galactosyl-(1&lt;-&gt;1')-N-acylsphing-4-enine + sulfate + H(+). With respect to regulation, inhibited by phosphate. The phosphate forms a covalent bond with the active site 3-oxoalanine. Its function is as follows. Hydrolyzes cerebroside sulfate. The protein is Arylsulfatase A (ARSA) of Homo sapiens (Human).